The following is a 2262-amino-acid chain: Protein Ycf2 (2262 aa).

1607–1614 (GFIGTGRS) provides a ligand contact to ATP.

Belongs to the Ycf2 family.

The protein localises to the plastid. It is found in the chloroplast stroma. Its function is as follows. Probable ATPase of unknown function. Its presence in a non-photosynthetic plant (Epifagus virginiana) and experiments in tobacco indicate that it has an essential function which is probably not related to photosynthesis. The protein is Protein Ycf2 of Nuphar advena (Common spatterdock).